Consider the following 141-residue polypeptide: Large ribosomal subunit protein uL16 (141 aa).

Residues 1–20 (MLMPKRTKYRKQMKGRNRGK) are disordered.

Belongs to the universal ribosomal protein uL16 family. As to quaternary structure, part of the 50S ribosomal subunit.

In terms of biological role, binds 23S rRNA and is also seen to make contacts with the A and possibly P site tRNAs. This chain is Large ribosomal subunit protein uL16, found in Helicobacter hepaticus (strain ATCC 51449 / 3B1).